The sequence spans 348 residues: Quinolinate synthase (348 aa).

Positions 47 and 68 each coordinate iminosuccinate. Cys113 lines the [4Fe-4S] cluster pocket. Residues 139-141 and Ser156 each bind iminosuccinate; that span reads YAN. Cys200 is a binding site for [4Fe-4S] cluster. Iminosuccinate is bound by residues 226-228 and Thr243; that span reads HPE. A [4Fe-4S] cluster-binding site is contributed by Cys297.

The protein belongs to the quinolinate synthase family. Type 1 subfamily. [4Fe-4S] cluster serves as cofactor.

It localises to the cytoplasm. The catalysed reaction is iminosuccinate + dihydroxyacetone phosphate = quinolinate + phosphate + 2 H2O + H(+). It participates in cofactor biosynthesis; NAD(+) biosynthesis; quinolinate from iminoaspartate: step 1/1. Catalyzes the condensation of iminoaspartate with dihydroxyacetone phosphate to form quinolinate. In Sodalis glossinidius (strain morsitans), this protein is Quinolinate synthase.